The following is a 593-amino-acid chain: NADH-quinone oxidoreductase subunit C/D (593 aa).

An NADH dehydrogenase I subunit C region spans residues 1–184; it reads MTTGSALYIP…DPFSLNLAKQ (184 aa). The NADH dehydrogenase I subunit D stretch occupies residues 208 to 593; that stretch reads DYMFLNLGPN…IDFVMADVDR (386 aa).

It in the N-terminal section; belongs to the complex I 30 kDa subunit family. In the C-terminal section; belongs to the complex I 49 kDa subunit family. As to quaternary structure, NDH-1 is composed of 13 different subunits. Subunits NuoB, CD, E, F, and G constitute the peripheral sector of the complex.

It is found in the cell inner membrane. It carries out the reaction a quinone + NADH + 5 H(+)(in) = a quinol + NAD(+) + 4 H(+)(out). NDH-1 shuttles electrons from NADH, via FMN and iron-sulfur (Fe-S) centers, to quinones in the respiratory chain. The immediate electron acceptor for the enzyme in this species is believed to be ubiquinone. Couples the redox reaction to proton translocation (for every two electrons transferred, four hydrogen ions are translocated across the cytoplasmic membrane), and thus conserves the redox energy in a proton gradient. This Pseudomonas fluorescens (strain ATCC BAA-477 / NRRL B-23932 / Pf-5) protein is NADH-quinone oxidoreductase subunit C/D.